The following is a 419-amino-acid chain: Probable pectate lyase C (419 aa).

An N-terminal signal peptide occupies residues 1 to 19 (MRLTPSLISCLSLLHFTSA). 3 N-linked (GlcNAc...) asparagine glycosylation sites follow: Asn48, Asn164, and Asn201. The active site involves Arg204. Residues 261–296 (NENFHAYVETNYYDSDKDGTLNGSELGVDSTNYGGM) form the EF-hand domain. Positions 274, 276, 278, and 280 each coordinate Ca(2+). Asn282 carries an N-linked (GlcNAc...) asparagine glycan. Ca(2+) is bound at residue Glu285. A disordered region spans residues 352 to 395 (ISDEADMGGAGDLDQGTTPTDTDGDGIPDDAEAELGTDPNTADS). Positions 363-372 (DLDQGTTPTD) are enriched in low complexity. Residues 373-386 (TDGDGIPDDAEAEL) show a composition bias toward acidic residues.

This sequence belongs to the polysaccharide lyase 1 family. Ca(2+) serves as cofactor.

Its subcellular location is the secreted. It catalyses the reaction Eliminative cleavage of (1-&gt;4)-alpha-D-galacturonan to give oligosaccharides with 4-deoxy-alpha-D-galact-4-enuronosyl groups at their non-reducing ends.. Functionally, pectinolytic enzyme consist of four classes of enzymes: pectin lyase, polygalacturonase, pectin methylesterase and rhamnogalacturonase. Among pectinolytic enzymes, pectin lyase is the most important in depolymerization of pectin, since it cleaves internal glycosidic bonds of highly methylated pectins. Favors pectate, the anion, over pectin, the methyl ester. This chain is Probable pectate lyase C (plyC), found in Aspergillus oryzae (strain ATCC 42149 / RIB 40) (Yellow koji mold).